The sequence spans 468 residues: Adenylosuccinate synthetase (468 aa).

Residues 23–29 and 51–53 each bind GTP; these read GDEGKGK and GHE. The active-site Proton acceptor is D24. Positions 24 and 51 each coordinate Mg(2+). Residues 24–27, 49–52, T142, R156, N238, T253, and R317 each bind IMP; these read DEGK and NSGH. H52 (proton donor) is an active-site residue. 313–319 is a binding site for substrate; sequence VTTGRTR. Residues R319 and 345–347 contribute to the GTP site; that span reads KLD.

The protein belongs to the adenylosuccinate synthetase family. Homodimer. It depends on Mg(2+) as a cofactor.

Its subcellular location is the cytoplasm. It catalyses the reaction IMP + L-aspartate + GTP = N(6)-(1,2-dicarboxyethyl)-AMP + GDP + phosphate + 2 H(+). Its pathway is purine metabolism; AMP biosynthesis via de novo pathway; AMP from IMP: step 1/2. Its function is as follows. Plays an important role in the salvage pathway for purine nucleotide biosynthesis. Catalyzes the first committed step in the biosynthesis of AMP from IMP. The sequence is that of Adenylosuccinate synthetase from Theileria annulata.